The primary structure comprises 285 residues: Probable endonuclease 4 (285 aa).

Zn(2+)-binding residues include histidine 69, histidine 109, glutamate 145, aspartate 179, histidine 182, histidine 216, aspartate 229, histidine 231, and glutamate 261.

It belongs to the AP endonuclease 2 family. It depends on Zn(2+) as a cofactor.

It catalyses the reaction Endonucleolytic cleavage to 5'-phosphooligonucleotide end-products.. Endonuclease IV plays a role in DNA repair. It cleaves phosphodiester bonds at apurinic or apyrimidinic (AP) sites, generating a 3'-hydroxyl group and a 5'-terminal sugar phosphate. This Salmonella heidelberg (strain SL476) protein is Probable endonuclease 4.